A 357-amino-acid polypeptide reads, in one-letter code: Adenosine deaminase (357 aa).

Zn(2+)-binding residues include His16 and His18. The substrate site is built by His18, Asp20, and Gly185. A Zn(2+)-binding site is contributed by His212. The active-site Proton donor is the Glu215. Residue Asp294 participates in Zn(2+) binding. Asp295 is a substrate binding site.

The protein belongs to the metallo-dependent hydrolases superfamily. Adenosine and AMP deaminases family. It depends on Zn(2+) as a cofactor.

It is found in the cell membrane. The protein localises to the cell junction. It localises to the cytoplasmic vesicle lumen. The protein resides in the cytoplasm. Its subcellular location is the lysosome. It carries out the reaction adenosine + H2O + H(+) = inosine + NH4(+). The enzyme catalyses 2'-deoxyadenosine + H2O + H(+) = 2'-deoxyinosine + NH4(+). In terms of biological role, catalyzes the hydrolytic deamination of adenosine and 2-deoxyadenosine. Plays an important role in purine metabolism and in adenosine homeostasis. Modulates signaling by extracellular adenosine, and so contributes indirectly to cellular signaling events. May act as a positive regulator of T-cell coactivation. The chain is Adenosine deaminase (ADA) from Gallus gallus (Chicken).